Reading from the N-terminus, the 309-residue chain is Probable inactive poly [ADP-ribose] polymerase SRO5 (309 aa).

The region spanning 28–255 (CDSSSDRSFA…AFPVLIKALS (228 aa)) is the PARP catalytic domain. The RST domain occupies 238–309 (KRLRSPWMAF…IKACGHKVQH (72 aa)).

As to quaternary structure, interacts with dehydration-responsive DREB2 proteins and a number of transcription factors belonging to several protein families.

Its subcellular location is the nucleus matrix. Functionally, probable inactive ADP-ribosyltransferase that may be involved in stress and developmental responses. This is Probable inactive poly [ADP-ribose] polymerase SRO5 (SRO5) from Arabidopsis thaliana (Mouse-ear cress).